Here is a 235-residue protein sequence, read N- to C-terminus: Sugar fermentation stimulation protein homolog (235 aa).

Belongs to the SfsA family.

The protein is Sugar fermentation stimulation protein homolog of Maricaulis maris (strain MCS10) (Caulobacter maris).